The sequence spans 216 residues: Peroxiredoxin (216 aa).

A Thioredoxin domain is found at 2–158; the sequence is IVIGEKFPEV…ILRLVKALKI (157 aa). The active-site Cysteine sulfenic acid (-SOH) intermediate is cysteine 46. Position 121 (arginine 121) interacts with substrate. The cysteines at positions 205 and 211 are disulfide-linked.

The protein belongs to the peroxiredoxin family. Prx6 subfamily. Homodecamer. Pentamer of dimers that assemble into a ring structure.

The protein resides in the cytoplasm. It carries out the reaction a hydroperoxide + [thioredoxin]-dithiol = an alcohol + [thioredoxin]-disulfide + H2O. Its function is as follows. Thiol-specific peroxidase that catalyzes the reduction of hydrogen peroxide and organic hydroperoxides to water and alcohols, respectively. Plays a role in cell protection against oxidative stress by detoxifying peroxides. The protein is Peroxiredoxin of Pyrococcus furiosus (strain ATCC 43587 / DSM 3638 / JCM 8422 / Vc1).